The following is a 724-amino-acid chain: Methionine--tRNA ligase (724 aa).

Residues 11–21 (PYANGPIHAGH) carry the 'HIGH' region motif. Cys143, Cys146, Cys156, and Cys159 together coordinate Zn(2+). The 'KMSKS' region signature appears at 344 to 348 (KFSTS). Thr347 is a binding site for ATP. Residues 624-724 (EFSKIDLRIG…KEVKLGAKVR (101 aa)) form the tRNA-binding domain.

Belongs to the class-I aminoacyl-tRNA synthetase family. MetG type 1 subfamily. Homodimer. It depends on Zn(2+) as a cofactor.

The protein localises to the cytoplasm. It catalyses the reaction tRNA(Met) + L-methionine + ATP = L-methionyl-tRNA(Met) + AMP + diphosphate. Its function is as follows. Is required not only for elongation of protein synthesis but also for the initiation of all mRNA translation through initiator tRNA(fMet) aminoacylation. This is Methionine--tRNA ligase from Pyrococcus furiosus (strain ATCC 43587 / DSM 3638 / JCM 8422 / Vc1).